The chain runs to 211 residues: SsrA-binding protein (211 aa).

2 disordered regions span residues Met1–Ser20 and Arg170–Asn211. The segment covering Gln177–Arg187 has biased composition (polar residues).

It belongs to the SmpB family.

Its subcellular location is the cytoplasm. Its function is as follows. Required for rescue of stalled ribosomes mediated by trans-translation. Binds to transfer-messenger RNA (tmRNA), required for stable association of tmRNA with ribosomes. tmRNA and SmpB together mimic tRNA shape, replacing the anticodon stem-loop with SmpB. tmRNA is encoded by the ssrA gene; the 2 termini fold to resemble tRNA(Ala) and it encodes a 'tag peptide', a short internal open reading frame. During trans-translation Ala-aminoacylated tmRNA acts like a tRNA, entering the A-site of stalled ribosomes, displacing the stalled mRNA. The ribosome then switches to translate the ORF on the tmRNA; the nascent peptide is terminated with the 'tag peptide' encoded by the tmRNA and targeted for degradation. The ribosome is freed to recommence translation, which seems to be the essential function of trans-translation. This is SsrA-binding protein from Tropheryma whipplei (strain TW08/27) (Whipple's bacillus).